Here is a 380-residue protein sequence, read N- to C-terminus: MSQSKPTVNPPLWLLAELTYRCPLQCPYCSNPLDFARQDKELTTEQWIEVFRQARAMGSVQLGFSGGEPLTRKDLPELIRAARDLGFYTNLITSGIGLTESKLDAFSEAGLDHIQISFQASDEVLNAALAGNKKAFQQKLAMAKAVKARDYPMVLNFVLHRHNIDQLDKIIELCIELEADDVELATCQFYGWAFLNREGLLPTREQIARAEQVVADYRQKMAASGNLTNLLFVTPDYYEERPKGCMGGWGSIFLSVTPEGTALPCHSARQLPVAFPSVLEQSLESIWYDSFGFNRYRGYDWMPEPCRSCDEKEKDFGGCRCQAFMLTGSADNADPVCSKSPHHHKILEARREAACSDIKVSQLQFRNRTRSQLIYQTRDL.

Residues valine 8–alanine 223 enclose the Radical SAM core domain. 3 residues coordinate [4Fe-4S] cluster: cysteine 22, cysteine 26, and cysteine 29.

It belongs to the radical SAM superfamily. PqqE family. As to quaternary structure, interacts with PqqD. The interaction is necessary for activity of PqqE. [4Fe-4S] cluster serves as cofactor.

It catalyses the reaction [PQQ precursor protein] + S-adenosyl-L-methionine = E-Y cross-linked-[PQQ precursor protein] + 5'-deoxyadenosine + L-methionine + H(+). It participates in cofactor biosynthesis; pyrroloquinoline quinone biosynthesis. Functionally, catalyzes the cross-linking of a glutamate residue and a tyrosine residue in the PqqA protein as part of the biosynthesis of pyrroloquinoline quinone (PQQ). This chain is PqqA peptide cyclase (pqqE), found in Klebsiella pneumoniae.